The sequence spans 453 residues: Trigger factor (453 aa).

The PPIase FKBP-type domain occupies 171 to 256; that stretch reads GDRVTINFKG…ATSIEAPQDI (86 aa).

Belongs to the FKBP-type PPIase family. Tig subfamily.

The protein localises to the cytoplasm. The enzyme catalyses [protein]-peptidylproline (omega=180) = [protein]-peptidylproline (omega=0). Functionally, involved in protein export. Acts as a chaperone by maintaining the newly synthesized protein in an open conformation. Functions as a peptidyl-prolyl cis-trans isomerase. This is Trigger factor from Bradyrhizobium diazoefficiens (strain JCM 10833 / BCRC 13528 / IAM 13628 / NBRC 14792 / USDA 110).